The following is a 103-amino-acid chain: Large ribosomal subunit protein bL21 (103 aa).

The protein belongs to the bacterial ribosomal protein bL21 family. Part of the 50S ribosomal subunit. Contacts protein L20.

In terms of biological role, this protein binds to 23S rRNA in the presence of protein L20. The chain is Large ribosomal subunit protein bL21 from Pseudomonas aeruginosa (strain LESB58).